Reading from the N-terminus, the 256-residue chain is Isoprenyl transferase (256 aa).

The active site involves D33. Residue D33 participates in Mg(2+) binding. Substrate contacts are provided by residues 34–37 (GNGR), W38, R46, H50, and 78–80 (STE). N81 serves as the catalytic Proton acceptor. Substrate contacts are provided by residues W82, R84, R201, and 207–209 (RIS). Mg(2+) is bound at residue E220.

Belongs to the UPP synthase family. In terms of assembly, homodimer. It depends on Mg(2+) as a cofactor.

Functionally, catalyzes the condensation of isopentenyl diphosphate (IPP) with allylic pyrophosphates generating different type of terpenoids. In Staphylococcus aureus (strain COL), this protein is Isoprenyl transferase.